The primary structure comprises 514 residues: tRNA-2-methylthio-N(6)-dimethylallyladenosine synthase (514 aa).

The MTTase N-terminal domain occupies 68–186 (RTFLIKTYGC…LPEILEEAYL (119 aa)). [4Fe-4S] cluster-binding residues include Cys-77, Cys-113, Cys-147, Cys-223, Cys-227, and Cys-230. Positions 209–439 (REGSTKAWVN…NKKVGHYSEK (231 aa)) constitute a Radical SAM core domain. The TRAM domain maps to 442–505 (NQYEGKTVTV…QYSLNGTFKE (64 aa)).

The protein belongs to the methylthiotransferase family. MiaB subfamily. In terms of assembly, monomer. [4Fe-4S] cluster is required as a cofactor.

The protein resides in the cytoplasm. It catalyses the reaction N(6)-dimethylallyladenosine(37) in tRNA + (sulfur carrier)-SH + AH2 + 2 S-adenosyl-L-methionine = 2-methylsulfanyl-N(6)-dimethylallyladenosine(37) in tRNA + (sulfur carrier)-H + 5'-deoxyadenosine + L-methionine + A + S-adenosyl-L-homocysteine + 2 H(+). Functionally, catalyzes the methylthiolation of N6-(dimethylallyl)adenosine (i(6)A), leading to the formation of 2-methylthio-N6-(dimethylallyl)adenosine (ms(2)i(6)A) at position 37 in tRNAs that read codons beginning with uridine. The sequence is that of tRNA-2-methylthio-N(6)-dimethylallyladenosine synthase from Staphylococcus haemolyticus (strain JCSC1435).